Consider the following 702-residue polypeptide: Flagellar operon control protein UmoB (702 aa).

5 consecutive transmembrane segments (helical) span residues 4–24 (SVIILAIFMISLFIMAAFLFF), 204–224 (GFWNGSLICLGLILWLTALMM), 227–247 (VFLPWIMAAGGTFLVLGLFLI), 343–363 (IIFVVCSLFIIGMLYLYQPLS), and 656–676 (GNTLLLFFAIGFLILNLFFII).

It belongs to the IgaA family.

Its subcellular location is the cell inner membrane. Functionally, up-regulator of flagellar flhDC master operon. The polypeptide is Flagellar operon control protein UmoB (umoB) (Proteus mirabilis).